We begin with the raw amino-acid sequence, 346 residues long: Acrosin (346 aa).

The signal sequence occupies residues 1-19 (MALLLPLAVLLAACRPGHG). 6 disulfides stabilise this stretch: C24/C146, C27/C154, C70/C86, C168/C240, C203/C219, and C230/C260. One can recognise a Peptidase S1 domain in the interval 41–284 (VVGGTEALHG…FYNWILLQVR (244 aa)). The Charge relay system role is filled by H85. N-linked (GlcNAc...) asparagine glycosylation is present at N128. Residue D134 is the Charge relay system of the active site. A glycan (N-linked (GlcNAc...) asparagine) is linked at N204. S234 serves as the catalytic Charge relay system. Positions 266–346 (PGIYTSTQHF…LLQSLWGSKA (81 aa)) are excised as a propeptide.

It belongs to the peptidase S1 family. In terms of assembly, heavy chain (catalytic) and a light chain linked by two disulfide bonds. In terms of processing, glycosylated.

It carries out the reaction Preferential cleavage: Arg-|-Xaa, Lys-|-Xaa.. Its activity is regulated as follows. Inhibited by aprotinin, ovomucoid, soybean trypsin inhibitor, benzamidine, p-aminobenzamidine, and zinc ions. Activity also inhibited by a Kazal-type proteinase inhibitor. In terms of biological role, serine protease of trypsin-like cleavage specificity. Synthesized in a zymogen form, proacrosin and stored in the acrosome. This Meleagris gallopavo (Wild turkey) protein is Acrosin.